Here is a 436-residue protein sequence, read N- to C-terminus: 3-ketoacyl-CoA thiolase (436 aa).

The active-site Acyl-thioester intermediate is the Cys-99. Residues His-392 and Cys-422 each act as proton acceptor in the active site.

This sequence belongs to the thiolase-like superfamily. Thiolase family. As to quaternary structure, heterotetramer of two alpha chains (FadJ) and two beta chains (FadI).

The protein resides in the cytoplasm. It carries out the reaction an acyl-CoA + acetyl-CoA = a 3-oxoacyl-CoA + CoA. Its pathway is lipid metabolism; fatty acid beta-oxidation. Functionally, catalyzes the final step of fatty acid oxidation in which acetyl-CoA is released and the CoA ester of a fatty acid two carbons shorter is formed. The polypeptide is 3-ketoacyl-CoA thiolase (Yersinia pestis bv. Antiqua (strain Angola)).